The chain runs to 527 residues: MQAHAAETKKVDVLLVGGGIMSSTLAVWLHELEPSWSMEMVERLDGVAEESSNGWNNAGTGHSALAELNYTPEDKDGNVNISKAIEINEAFQISRQFWSWQVRQGVLKNPHSFINTTPHMSFVWGDDNIKFLKKRYDALQASPLFRPMQYSEDHAQIAKWVPLMMEGRDPNQKLAVTWTPIGTDVNFGEITRQFVGHLQTQKGFELKLSSEVQDITRNKDGSWHVEYKNLKDGTESATDAKFLFIGAGGGALKLLQKSGIPEAKEYAGFPVGGSFLVTENPTVAMQHMAKAYGIASTGAPPMSVPHLDTRVLDGKRVILFGPFATFSTKFLKNGSYLDLLSSTTTHNVWPMTKVGIDQYPLVEYLAGQLMLSDDDRFEALRTYFPNAKKEEWRLWQAGQRVQIIKRDAEKGGVLKLGTEVVASEDRTIAGLLGASPGASTAAPIMLHVLETVFKEKVATPEWQAKIKEIVPSYGTKLNDSAAATQKEWNYTAEVLQLGKPPVIDASVEFGGAASKPVESKPENDMAL.

It belongs to the MQO family. Requires FAD as cofactor.

It catalyses the reaction (S)-malate + a quinone = a quinol + oxaloacetate. Its pathway is carbohydrate metabolism; tricarboxylic acid cycle; oxaloacetate from (S)-malate (quinone route): step 1/1. The polypeptide is Probable malate:quinone oxidoreductase 2 (Pseudomonas putida (strain ATCC 47054 / DSM 6125 / CFBP 8728 / NCIMB 11950 / KT2440)).